Here is a 226-residue protein sequence, read N- to C-terminus: MLKNIPIPSPLSPVEGILIKRKTLERYFSIERLEQQAHQRAKRILREAEEEAKTLRMYAYQEGYEQGMIDALQQVAAYLTDNQTMAWKWMEKIQIYARELFSAAVDHPETLLTVLDEWLRDFDKPEGQLFLTLPVNAKKDHQKLMVLLMENWPGTFNLKYHQEQRFIMSCGDQIAEFSPEQFVETAVGVIKHHLDELPQDCRTISDNAINALIDEWKTKTQAEVIR.

The core secretion machinery of the T3SS is composed of approximately 20 different proteins, including cytoplasmic components, a base, an export apparatus and a needle. This subunit is part of the cytosolic complex. Interacts directly with InvC/SctN1 (T3SS-1 ATPase) and SpaO/SctQ (the major sorting platform component).

It is found in the cytoplasm. Functionally, component of the type III secretion system (T3SS), also called injectisome, which is used to inject bacterial effector proteins into eukaryotic host cells. Acts as a regulator of the InvC/SctN1 ATPase activity. Required for invasion and secretion. The polypeptide is SPI-1 type 3 secretion system stator protein (Salmonella typhimurium (strain SL1344)).